The chain runs to 738 residues: LPS-assembly protein LptD (738 aa).

The first 26 residues, Met1 to Ala26, serve as a signal peptide directing secretion.

It belongs to the LptD family. Component of the lipopolysaccharide transport and assembly complex. Interacts with LptE and LptA.

The protein resides in the cell outer membrane. In terms of biological role, together with LptE, is involved in the assembly of lipopolysaccharide (LPS) at the surface of the outer membrane. The sequence is that of LPS-assembly protein LptD from Nitrosococcus oceani (strain ATCC 19707 / BCRC 17464 / JCM 30415 / NCIMB 11848 / C-107).